Here is a 347-residue protein sequence, read N- to C-terminus: Phosphate acyltransferase (347 aa).

It belongs to the PlsX family. As to quaternary structure, homodimer. Probably interacts with PlsY.

It localises to the cytoplasm. The enzyme catalyses a fatty acyl-[ACP] + phosphate = an acyl phosphate + holo-[ACP]. It participates in lipid metabolism; phospholipid metabolism. In terms of biological role, catalyzes the reversible formation of acyl-phosphate (acyl-PO(4)) from acyl-[acyl-carrier-protein] (acyl-ACP). This enzyme utilizes acyl-ACP as fatty acyl donor, but not acyl-CoA. This is Phosphate acyltransferase from Anaplasma marginale (strain St. Maries).